The following is a 256-amino-acid chain: Adenylate kinase (256 aa).

45–50 lines the ATP pocket; the sequence is GAGKGT. An NMP region spans residues 67–96; sequence ATGDLLRQQVAMGTDLGKQAKKIMDQGALV. AMP is bound by residues threonine 68, arginine 73, 94–96, 123–126, and glutamine 130; these read ALV and GFPR. Residues 164 to 201 are LID; it reads GRLIHPGSGRSYHKIFSPPKQPMKDDITGEPLVQRSDD. ATP contacts are provided by residues arginine 165 and 174–175; that span reads SY. The AMP site is built by arginine 198 and arginine 209. Glutamine 237 provides a ligand contact to ATP.

This sequence belongs to the adenylate kinase family. AK2 subfamily. In terms of assembly, monomer.

Its subcellular location is the cytoplasm. The protein resides in the cytosol. It localises to the mitochondrion intermembrane space. The enzyme catalyses AMP + ATP = 2 ADP. In terms of biological role, catalyzes the reversible transfer of the terminal phosphate group between ATP and AMP. Plays an important role in cellular energy homeostasis and in adenine nucleotide metabolism. Adenylate kinase activity is critical for regulation of the phosphate utilization and the AMP de novo biosynthesis pathways. The chain is Adenylate kinase from Malassezia globosa (strain ATCC MYA-4612 / CBS 7966) (Dandruff-associated fungus).